A 197-amino-acid polypeptide reads, in one-letter code: HTH-type transcriptional regulator BetI (197 aa).

Positions Pro-8–Leu-68 constitute an HTH tetR-type domain. Positions Ser-31–Phe-50 form a DNA-binding region, H-T-H motif.

It participates in amine and polyamine biosynthesis; betaine biosynthesis via choline pathway [regulation]. In terms of biological role, repressor involved in the biosynthesis of the osmoprotectant glycine betaine. It represses transcription of the choline transporter BetT and the genes of BetAB involved in the synthesis of glycine betaine. The chain is HTH-type transcriptional regulator BetI from Pseudomonas syringae pv. tomato (strain ATCC BAA-871 / DC3000).